A 186-amino-acid chain; its full sequence is Ribosome-recycling factor (186 aa).

This sequence belongs to the RRF family.

The protein localises to the cytoplasm. Its function is as follows. Responsible for the release of ribosomes from messenger RNA at the termination of protein biosynthesis. May increase the efficiency of translation by recycling ribosomes from one round of translation to another. The chain is Ribosome-recycling factor from Brucella abortus (strain S19).